A 438-amino-acid polypeptide reads, in one-letter code: Flotillin-2 (438 aa).

Belongs to the band 7/mec-2 family. Flotillin subfamily. In terms of assembly, heterooligomeric complex of flotillins 1 and 2.

The protein resides in the membrane. In terms of biological role, may play a role in axon growth and regeneration. May be involved in epidermal cell adhesion and epidermal structure and function. This is Flotillin-2 from Drosophila melanogaster (Fruit fly).